The sequence spans 201 residues: Probable GTP-binding protein EngB (201 aa).

The region spanning 21-191 is the EngB-type G domain; that stretch reads AAPQIILAGR…WNLLDVTAIP (171 aa). GTP-binding positions include 29-36, 56-60, 75-78, 142-145, and 168-172; these read GRSNVGKS, GKTRS, DLPG, TKSD, and ICVSS. Mg(2+) is bound by residues Ser-36 and Thr-58.

This sequence belongs to the TRAFAC class TrmE-Era-EngA-EngB-Septin-like GTPase superfamily. EngB GTPase family. Mg(2+) serves as cofactor.

Functionally, necessary for normal cell division and for the maintenance of normal septation. This chain is Probable GTP-binding protein EngB, found in Maridesulfovibrio salexigens (strain ATCC 14822 / DSM 2638 / NCIMB 8403 / VKM B-1763) (Desulfovibrio salexigens).